The chain runs to 246 residues: uncharacterized protein (246 aa).

Transmembrane regions (helical) follow at residues 32-52 (TLFF…VGFI), 69-89 (IIAI…MCPF), 121-141 (IYFK…GVKI), and 146-166 (LAYL…MFFC). 4Fe-4S ferredoxin-type domains lie at 185–213 (FKLK…ITEK) and 210–239 (ITEK…FSAF). Residues C194, C197, C200, C204, C219, C222, C225, and C229 each contribute to the [4Fe-4S] cluster site.

Its subcellular location is the cell membrane. This is an uncharacterized protein from Methanocaldococcus jannaschii (strain ATCC 43067 / DSM 2661 / JAL-1 / JCM 10045 / NBRC 100440) (Methanococcus jannaschii).